The following is a 524-amino-acid chain: Excitatory amino acid transporter 3 (524 aa).

Over 1 to 18 (MGKPARKGCDSKRFLKNN) the chain is Cytoplasmic. The chain crosses the membrane as a helical span at residues 19–38 (WLLLSTVVAVVLGIVIGVLV). The Extracellular segment spans residues 39-61 (REYSNLSTLDKFYFAFPGEILMR). Asparagine 43 is a glycosylation site (N-linked (GlcNAc...) asparagine). Residues 62 to 82 (MLKLVILPLIVSSMITGVAAL) traverse the membrane as a helical segment. The Cytoplasmic portion of the chain corresponds to 83–93 (DSNVSGKIGLR). Residues 94–114 (AVLYYFCTTIIAVILGIVLVV) form a helical membrane-spanning segment. The Na(+) site is built by tyrosine 98, threonine 101, and threonine 102. Topologically, residues 115–205 (SIKPGVTQKV…RTKEYRVVGL (91 aa)) are extracellular. 2 N-linked (GlcNAc...) asparagine glycosylation sites follow: asparagine 178 and asparagine 195. Residues 206 to 229 (YSDGINVLGLIVFCLVFGLVIGKM) traverse the membrane as a helical segment. At 230–238 (GEKGQILVD) the chain is on the cytoplasmic side. The chain crosses the membrane as a helical span at residues 239–266 (FFNALSDATMKIVQIIMCYMPLGILFLI). At 267–286 (AGKIIEVEDWEIFRKLGLYM) the chain is on the extracellular side. The chain crosses the membrane as a helical span at residues 287-308 (VTVLSGLAIHSIVILPLIYFIV). Residues 309-313 (VRKNP) lie on the Cytoplasmic side of the membrane. An intramembrane region (discontinuously helical) is located at residues 314–344 (FRFAMGMTQALLTALMISSSSATLPVTFRCA). L-aspartate contacts are provided by serine 331 and serine 333. Residues 345–353 (EEKNRVDKR) lie on the Cytoplasmic side of the membrane. A helical transmembrane segment spans residues 354-380 (ITRFVLPVGATINMDGTALYEAVAAVF). Na(+) is bound by residues glycine 362, threonine 364, asparagine 366, and aspartate 368. Threonine 370 contacts L-aspartate. The Extracellular segment spans residues 381-393 (IAQLNDMDLSIGQ). An intramembrane region (discontinuously helical) is located at residues 394–427 (IITISVTATAASIGAAGVPQAGLVTMVIVLSAVG). Na(+) is bound by residues serine 405, isoleucine 406, and alanine 408. An L-aspartate-binding site is contributed by valine 411. At 428 to 440 (LPAEDVTLIIAVD) the chain is on the extracellular side. A helical transmembrane segment spans residues 441–462 (WLLDRFRTVVNVLGDAFGTGIV). Residues arginine 447, threonine 448, and asparagine 451 each coordinate L-aspartate. 2 residues coordinate Na(+): asparagine 451 and aspartate 455. The Cytoplasmic portion of the chain corresponds to 463–524 (EKLSKKELEQ…TISFTQTSQF (62 aa)). Residues serine 517 and serine 522 each carry the phosphoserine modification.

It belongs to the dicarboxylate/amino acid:cation symporter (DAACS) (TC 2.A.23) family. SLC1A1 subfamily. Homotrimer. Interacts with ARL6IP5. Interacts with RTN2 (via N-terminus); the interaction promotes cell surface expression of SLC1A1. Interacts with SORCS2; this interaction is important for normal expression at the cell membrane. Brain, but also small intestine, kidney, liver and heart.

The protein resides in the cell membrane. It is found in the apical cell membrane. Its subcellular location is the synapse. It localises to the synaptosome. The protein localises to the early endosome membrane. The protein resides in the late endosome membrane. It is found in the recycling endosome membrane. It catalyses the reaction K(+)(in) + L-glutamate(out) + 3 Na(+)(out) + H(+)(out) = K(+)(out) + L-glutamate(in) + 3 Na(+)(in) + H(+)(in). It carries out the reaction K(+)(in) + L-aspartate(out) + 3 Na(+)(out) + H(+)(out) = K(+)(out) + L-aspartate(in) + 3 Na(+)(in) + H(+)(in). The enzyme catalyses D-aspartate(out) + K(+)(in) + 3 Na(+)(out) + H(+)(out) = D-aspartate(in) + K(+)(out) + 3 Na(+)(in) + H(+)(in). The catalysed reaction is K(+)(in) + L-cysteine(out) + 3 Na(+)(out) + H(+)(out) = K(+)(out) + L-cysteine(in) + 3 Na(+)(in) + H(+)(in). Functionally, sodium-dependent, high-affinity amino acid transporter that mediates the uptake of L-glutamate and also L-aspartate and D-aspartate. Can also transport L-cysteine. Functions as a symporter that transports one amino acid molecule together with two or three Na(+) ions and one proton, in parallel with the counter-transport of one K(+) ion. Mediates Cl(-) flux that is not coupled to amino acid transport; this avoids the accumulation of negative charges due to aspartate and Na(+) symport. Plays an important role in L-glutamate and L-aspartate reabsorption in renal tubuli. Plays a redundant role in the rapid removal of released glutamate from the synaptic cleft, which is essential for terminating the postsynaptic action of glutamate. Contributes to glutathione biosynthesis and protection against oxidative stress via its role in L-glutamate and L-cysteine transport. Negatively regulated by ARL6IP5. The sequence is that of Excitatory amino acid transporter 3 (SLC1A1) from Oryctolagus cuniculus (Rabbit).